Consider the following 617-residue polypeptide: Chaperone protein DnaK (617 aa).

Thr174 carries the post-translational modification Phosphothreonine; by autocatalysis. The segment covering Ala575–Gln592 has biased composition (low complexity). Residues Ala575–Lys617 are disordered. Residues Thr593–Gly602 are compositionally biased toward polar residues. Acidic residues predominate over residues Val607–Lys617.

This sequence belongs to the heat shock protein 70 family.

Acts as a chaperone. The sequence is that of Chaperone protein DnaK from Halothermothrix orenii (strain H 168 / OCM 544 / DSM 9562).